An 81-amino-acid polypeptide reads, in one-letter code: ATP synthase subunit c, chloroplastic (81 aa).

2 helical membrane passes run 3–23 (PLIS…ASIG) and 57–77 (LAFM…LLFA).

Belongs to the ATPase C chain family. As to quaternary structure, F-type ATPases have 2 components, F(1) - the catalytic core - and F(0) - the membrane proton channel. F(1) has five subunits: alpha(3), beta(3), gamma(1), delta(1), epsilon(1). F(0) has four main subunits: a(1), b(1), b'(1) and c(10-14). The alpha and beta chains form an alternating ring which encloses part of the gamma chain. F(1) is attached to F(0) by a central stalk formed by the gamma and epsilon chains, while a peripheral stalk is formed by the delta, b and b' chains.

Its subcellular location is the plastid. The protein localises to the chloroplast thylakoid membrane. Functionally, f(1)F(0) ATP synthase produces ATP from ADP in the presence of a proton or sodium gradient. F-type ATPases consist of two structural domains, F(1) containing the extramembraneous catalytic core and F(0) containing the membrane proton channel, linked together by a central stalk and a peripheral stalk. During catalysis, ATP synthesis in the catalytic domain of F(1) is coupled via a rotary mechanism of the central stalk subunits to proton translocation. Its function is as follows. Key component of the F(0) channel; it plays a direct role in translocation across the membrane. A homomeric c-ring of between 10-14 subunits forms the central stalk rotor element with the F(1) delta and epsilon subunits. This Acorus calamus var. americanus (American sweet flag) protein is ATP synthase subunit c, chloroplastic.